The chain runs to 282 residues: MANQLILLKKDFFTDEQQAVTVADRYPQDVFAEHTHEFCELVMVWRGNGLHVLNDRPYRITRGDLFYIRAEDKHSYTSVNDLVLQNIIYCPERLKLNVNWQAMIPGFQGAQWHPHWRLGSMGMNQARQVINQLEHESNGRDPLANEMAELLFGQLVMTLKRHRYATDDLPATSRETLLDKLITALANSLECPFALDAFCQQEQCSERVLRQQFRAQTGMTINQYLRQVRICHAQYLLQHSPLMISEISMQCGFEDSNYFSVVFTRETGMTPSQWRHLSNQSD.

Residues 179-277 enclose the HTH araC/xylS-type domain; that stretch reads DKLITALANS…GMTPSQWRHL (99 aa). 2 consecutive DNA-binding regions (H-T-H motif) follow at residues 196-217 and 244-267; these read DAFCQQEQCSERVLRQQFRAQT and ISEISMQCGFEDSNYFSVVFTRET.

In terms of assembly, binds DNA as a dimer.

It is found in the cytoplasm. Functionally, activates expression of the rhaSR operon in response to L-rhamnose. The chain is HTH-type transcriptional activator RhaR from Salmonella arizonae (strain ATCC BAA-731 / CDC346-86 / RSK2980).